The chain runs to 205 residues: Large ribosomal subunit protein bL21m (205 aa).

Residues 1–39 (MAASSLTVTLGRLASACSHSILRPSGPGAASLWSASRRF) constitute a mitochondrion transit peptide.

Belongs to the bacterial ribosomal protein bL21 family. As to quaternary structure, component of the mitochondrial large ribosomal subunit (mt-LSU). Mature mammalian 55S mitochondrial ribosomes consist of a small (28S) and a large (39S) subunit. The 28S small subunit contains a 12S ribosomal RNA (12S mt-rRNA) and 30 different proteins. The 39S large subunit contains a 16S rRNA (16S mt-rRNA), a copy of mitochondrial valine transfer RNA (mt-tRNA(Val)), which plays an integral structural role, and 52 different proteins.

The protein localises to the mitochondrion. This chain is Large ribosomal subunit protein bL21m (MRPL21), found in Homo sapiens (Human).